The sequence spans 547 residues: Chaperonin GroEL (547 aa).

ATP is bound by residues threonine 30–proline 33, lysine 51, aspartate 87–threonine 91, glycine 415, asparagine 479–alanine 481, and aspartate 495.

The protein belongs to the chaperonin (HSP60) family. As to quaternary structure, forms a cylinder of 14 subunits composed of two heptameric rings stacked back-to-back. Interacts with the co-chaperonin GroES.

It localises to the cytoplasm. It catalyses the reaction ATP + H2O + a folded polypeptide = ADP + phosphate + an unfolded polypeptide.. Functionally, together with its co-chaperonin GroES, plays an essential role in assisting protein folding. The GroEL-GroES system forms a nano-cage that allows encapsulation of the non-native substrate proteins and provides a physical environment optimized to promote and accelerate protein folding. In Acinetobacter baumannii (strain ACICU), this protein is Chaperonin GroEL.